A 194-amino-acid chain; its full sequence is Dof zinc finger protein DOF4.2 (194 aa).

A Dof-type zinc finger spans residues 21–75 (RVCPRCYSDQTRFSYFNNNKKSQPRYKCKNCCRCWTHGGVLRNIPVTGICDKSNL). The Zn(2+) site is built by C23, C26, C48, and C51.

It localises to the nucleus. Functionally, transcription factor that binds specifically to a 5'-AA[AG]G-3' consensus core sequence. The polypeptide is Dof zinc finger protein DOF4.2 (DOF4.2) (Arabidopsis thaliana (Mouse-ear cress)).